The following is a 37-amino-acid chain: U10-ctenitoxin-Co1a (37 aa).

4 cysteine pairs are disulfide-bonded: Cys2–Cys17, Cys9–Cys22, Cys16–Cys33, and Cys24–Cys31.

In terms of tissue distribution, expressed by the venom gland.

It localises to the secreted. Antagonist of L-type calcium channels (Cav1/CACNA1). The polypeptide is U10-ctenitoxin-Co1a (Ctenus ornatus (Brazilian spider)).